A 196-amino-acid chain; its full sequence is Deoxyribose-phosphate aldolase (196 aa).

Asp-91 acts as the Proton donor/acceptor in catalysis. The active-site Schiff-base intermediate with acetaldehyde is the Lys-153. The active-site Proton donor/acceptor is Lys-182.

It belongs to the DeoC/FbaB aldolase family. DeoC type 1 subfamily.

It is found in the cytoplasm. It catalyses the reaction 2-deoxy-D-ribose 5-phosphate = D-glyceraldehyde 3-phosphate + acetaldehyde. Its pathway is carbohydrate degradation; 2-deoxy-D-ribose 1-phosphate degradation; D-glyceraldehyde 3-phosphate and acetaldehyde from 2-deoxy-alpha-D-ribose 1-phosphate: step 2/2. Catalyzes a reversible aldol reaction between acetaldehyde and D-glyceraldehyde 3-phosphate to generate 2-deoxy-D-ribose 5-phosphate. This is Deoxyribose-phosphate aldolase from Mycoplasma mycoides subsp. mycoides SC (strain CCUG 32753 / NCTC 10114 / PG1).